Reading from the N-terminus, the 402-residue chain is D-mannonate dehydratase (402 aa).

2 residues coordinate substrate: Asn37 and His122. Tyr159 (proton donor/acceptor) is an active-site residue. A Mg(2+)-binding site is contributed by Asp210. His212 functions as the Proton donor/acceptor in the catalytic mechanism. The Mg(2+) site is built by Glu236 and Glu262. 5 residues coordinate substrate: Glu262, Arg283, His312, Asp316, and Glu339.

Belongs to the mandelate racemase/muconate lactonizing enzyme family. GalD subfamily. It depends on Mg(2+) as a cofactor.

The catalysed reaction is D-mannonate = 2-dehydro-3-deoxy-D-gluconate + H2O. Its pathway is carbohydrate metabolism; pentose and glucuronate interconversion. Its function is as follows. Catalyzes the dehydration of D-mannonate. Has no detectable activity with a panel of 70 other acid sugars (in vitro). The polypeptide is D-mannonate dehydratase (Rhizorhabdus wittichii (strain DSM 6014 / CCUG 31198 / JCM 15750 / NBRC 105917 / EY 4224 / RW1) (Sphingomonas wittichii)).